A 376-amino-acid chain; its full sequence is Cell adhesion molecule CEACAM18 (376 aa).

Residues 1–30 (MDFSRPSFSPWRWLTLVASLLTCGICQASG) form the signal peptide. At 31 to 330 (QIFISPDSLL…PLPTVNRELY (300 aa)) the chain is on the extracellular side. Residues Asn69, Asn95, and Asn110 are each glycosylated (N-linked (GlcNAc...) asparagine). The 86-residue stretch at 229-314 (PDYVSLWTQP…TQLTFYRDVT (86 aa)) folds into the Ig-like C2-type domain. A disulfide bridge links Cys257 with Cys298. A helical transmembrane segment spans residues 331–351 (IPGPLVIFLILLTSLGGAFVC). At 352 to 376 (RVLVYSLFQSCSRGKTCHKCPWQTN) the chain is on the cytoplasmic side.

This sequence belongs to the immunoglobulin superfamily. CEA family. In terms of tissue distribution, mostly expressed in the small and large intestine and at lower levels also in other organs.

It localises to the membrane. In Mus musculus (Mouse), this protein is Cell adhesion molecule CEACAM18.